The primary structure comprises 258 residues: Pyridoxal phosphate homeostasis protein (258 aa).

Lys47 bears the N6-(pyridoxal phosphate)lysine mark.

Belongs to the pyridoxal phosphate-binding protein YggS/PROSC family.

Pyridoxal 5'-phosphate (PLP)-binding protein, which is involved in PLP homeostasis. This chain is Pyridoxal phosphate homeostasis protein, found in Mycobacterium bovis (strain ATCC BAA-935 / AF2122/97).